Reading from the N-terminus, the 507-residue chain is Alkyl hydroperoxide reductase subunit F (507 aa).

Residue 207–222 (DVLIVGGGPASGSAAI) participates in FAD binding. An intrachain disulfide couples Cys-335 to Cys-338. Residue 347–361 (DVAVIGGGNSGVEAA) participates in NAD(+) binding. An FAD-binding site is contributed by 467–477 (TNVPGIFAAGD).

Belongs to the class-II pyridine nucleotide-disulfide oxidoreductase family. In terms of assembly, homodimer. The cofactor is FAD.

Serves to protect the cell against DNA damage by alkyl hydroperoxides. It can use either NADH or NADPH as electron donor for direct reduction of redox dyes or of alkyl hydroperoxides when combined with the AhpC protein. The protein is Alkyl hydroperoxide reductase subunit F (ahpF) of Staphylococcus aureus (strain MRSA252).